A 496-amino-acid chain; its full sequence is MIDLKQYEFWFLVGSQYLYGLETLKKVEQQASKIVDSLNDDPIFPSKIVLKPVLKSSSEITEIFEKANADPKCAGVIVWMHTFSPSKMWIRGLSINKKPLLHLHTQYNREIPWDTIDMDYMNLNQSAHGDREHGFIHARMRLPRKVVVGHWEEKEVREKIAKWMRVACAIQDGRMGQIVRFGDNMREVASTEGDKVEAQIKLGWSINTWGVGELAERVKAVPEREVEELLTEYREKYIMPEDEYSLKAIREQAKIEIALREFLKEKNAIAFTTTFEDLHDLPQLPGLAVQRLMEEGYGFGAEGDWKAAGLVRAIKVMGTGLPGGTSFMEDYTYHLTPGNELVLGAHMLEVCPTIAKEKPRIEVHPLSIGGKADPARLVFDGQEGPAVNASIVDMGNRFRLVVNKVLSVPIERKMPKLPTARVLWKPMPDFKRATTAWILAGGSHHTAFSTAIDIEYLIDWAEALEIEYVVIDENLDLEDFKKELRWNELYWGLLKR.

Residues glutamate 302, glutamate 329, histidine 346, and histidine 445 each contribute to the Mn(2+) site.

This sequence belongs to the arabinose isomerase family. Mn(2+) is required as a cofactor.

It catalyses the reaction beta-L-arabinopyranose = L-ribulose. Its pathway is carbohydrate degradation; L-arabinose degradation via L-ribulose; D-xylulose 5-phosphate from L-arabinose (bacterial route): step 1/3. In terms of biological role, catalyzes the conversion of L-arabinose to L-ribulose. This Thermotoga sp. (strain RQ2) protein is L-arabinose isomerase.